Reading from the N-terminus, the 269-residue chain is Hydroxyacylglutathione hydrolase (269 aa).

Histidine 56, histidine 58, aspartate 60, histidine 61, histidine 115, aspartate 137, and histidine 177 together coordinate Zn(2+).

It belongs to the metallo-beta-lactamase superfamily. Glyoxalase II family. As to quaternary structure, monomer. Zn(2+) is required as a cofactor.

The catalysed reaction is an S-(2-hydroxyacyl)glutathione + H2O = a 2-hydroxy carboxylate + glutathione + H(+). Its pathway is secondary metabolite metabolism; methylglyoxal degradation; (R)-lactate from methylglyoxal: step 2/2. Thiolesterase that catalyzes the hydrolysis of S-D-lactoyl-glutathione to form glutathione and D-lactic acid. The protein is Hydroxyacylglutathione hydrolase of Leptospira borgpetersenii serovar Hardjo-bovis (strain JB197).